Consider the following 579-residue polypeptide: Protein PLASTID MOVEMENT IMPAIRED 15 (579 aa).

Coiled coils occupy residues Glu-90–His-161, Lys-188–Glu-216, Gln-383–Ser-419, and Leu-481–Glu-501.

This sequence belongs to the WEB family.

In terms of biological role, required for the chloroplast avoidance response under high intensity blue light. This avoidance response consists in the relocation of chloroplasts on the anticlinal side of exposed cells. In Arabidopsis thaliana (Mouse-ear cress), this protein is Protein PLASTID MOVEMENT IMPAIRED 15 (PMI15).